A 222-amino-acid polypeptide reads, in one-letter code: 7-cyano-7-deazaguanine synthase (222 aa).

8–18 (LSGGMDSTTLA) contacts ATP. Zn(2+)-binding residues include C188, C196, C199, and C202.

This sequence belongs to the QueC family. Requires Zn(2+) as cofactor.

It carries out the reaction 7-carboxy-7-deazaguanine + NH4(+) + ATP = 7-cyano-7-deazaguanine + ADP + phosphate + H2O + H(+). It functions in the pathway purine metabolism; 7-cyano-7-deazaguanine biosynthesis. Its function is as follows. Catalyzes the ATP-dependent conversion of 7-carboxy-7-deazaguanine (CDG) to 7-cyano-7-deazaguanine (preQ(0)). This is 7-cyano-7-deazaguanine synthase from Methanoculleus marisnigri (strain ATCC 35101 / DSM 1498 / JR1).